The sequence spans 181 residues: MKQRGVTVWLTGLSGAGKSTITEALQAKLIAEGYSIEVLDGDIVRTNLTKGLGFSKEDRDENIRRIGFVSNLLTRHGVIVLVSAISPYREIREEVRGKIGNFVEVFVNAPLSVCEDRDVKGLYKRARAGEIKSFTGIDDPYEPPFNPEVECRTDLETLEESVAKVWNKLTELGYIHQAVAV.

12–19 (GLSGAGKS) serves as a coordination point for ATP. Residue Ser-86 is the Phosphoserine intermediate of the active site.

Belongs to the APS kinase family.

It carries out the reaction adenosine 5'-phosphosulfate + ATP = 3'-phosphoadenylyl sulfate + ADP + H(+). It participates in sulfur metabolism; hydrogen sulfide biosynthesis; sulfite from sulfate: step 2/3. Functionally, catalyzes the synthesis of activated sulfate. The chain is Adenylyl-sulfate kinase from Microcystis aeruginosa (strain NIES-843 / IAM M-2473).